A 207-amino-acid chain; its full sequence is Suppressor of IKBKE 1 (207 aa).

Coiled coils occupy residues H70–E102 and Q162–A193.

It belongs to the SIKE family. In terms of assembly, interacts with IKBKE and TBK1 via its coiled coil region. Interaction with TBK1 is disrupted upon viral infection or TLR3 stimulation. Interacts with CDC42BPB. Interacts with SIKE1 which mediates association with the STRIPAK core complex composed of PP2A catalytic and scaffolding subunits, the striatins (PP2A regulatory subunits), the striatin-associated proteins MOB4, STRIP1 and STRIP2, PDCD10 and members of the STE20 kinases, such as STK24 and STK26. Widely expressed. Expressed in brain, heart, skeletal muscle, colon, thymus, spleen, kidney, liver, small intestine, placenta, lung and leukocytes. Present in all cell lines tested (at protein level).

Its subcellular location is the cytoplasm. Physiological suppressor of IKK-epsilon and TBK1 that plays an inhibitory role in virus- and TLR3-triggered IRF3. Inhibits TLR3-mediated activation of interferon-stimulated response elements (ISRE) and the IFN-beta promoter. May act by disrupting the interactions of IKBKE or TBK1 with TICAM1/TRIF, IRF3 and RIGI. Does not inhibit NF-kappa-B activation pathways. Associates with the striatin-interacting phosphatase and kinase (STRIPAK) core complex, forming the extended (SIKE1:SLMAP)STRIPAK complex. The (SIKE1:SLMAP)STRIPAK complex dephosphorylates STK3 leading to the inhibition of Hippo signaling and the control of cell growth. The polypeptide is Suppressor of IKBKE 1 (Homo sapiens (Human)).